The chain runs to 540 residues: Putative BTB/POZ domain-containing protein R224 (540 aa).

The region spanning 16 to 88 (TDLELTLIDE…FYKNPIKYKN (73 aa)) is the BTB domain. The helical transmembrane segment at 356–376 (IFVSLLNDIIFVLSSINMYFI) threads the bilayer.

The protein belongs to the mimivirus BTB/WD family.

The protein localises to the membrane. This is Putative BTB/POZ domain-containing protein R224 from Acanthamoeba polyphaga (Amoeba).